Reading from the N-terminus, the 184-residue chain is Troponin I, slow skeletal muscle (184 aa).

Position 1 is an N-acetylproline; partial (Pro-1). An involved in binding TNC region spans residues 1-45 (PEVERKSKITASRKLLKSLMLAKAKECQQEHEAREAEKVRYLAER). Ser-55 is subject to Phosphoserine. The segment at 94–115 (LKLKVLDLRGKFKRPPLRRVRV) is involved in binding TNC and actin.

This sequence belongs to the troponin I family. In terms of assembly, binds to actin and tropomyosin. In the muscle sample, approximately 25% of the chains were blocked. Pro-1 is probably acetylated. Post-translationally, the N-terminus is blocked.

Functionally, troponin I is the inhibitory subunit of troponin, the thin filament regulatory complex which confers calcium-sensitivity to striated muscle actomyosin ATPase activity. The sequence is that of Troponin I, slow skeletal muscle (TNNI1) from Oryctolagus cuniculus (Rabbit).